Reading from the N-terminus, the 460-residue chain is Cysteine--tRNA ligase (460 aa).

Residue cysteine 28 participates in Zn(2+) binding. The 'HIGH' region signature appears at valine 30 to histidine 40. Zn(2+) is bound by residues cysteine 209, histidine 234, and glutamate 238. The 'KMSKS' region motif lies at lysine 266 to serine 270. Position 269 (lysine 269) interacts with ATP.

It belongs to the class-I aminoacyl-tRNA synthetase family. As to quaternary structure, monomer. Zn(2+) is required as a cofactor.

It localises to the cytoplasm. The enzyme catalyses tRNA(Cys) + L-cysteine + ATP = L-cysteinyl-tRNA(Cys) + AMP + diphosphate. This chain is Cysteine--tRNA ligase, found in Vibrio vulnificus (strain YJ016).